Consider the following 304-residue polypeptide: Large ribosomal subunit protein uL2 (304 aa).

The tract at residues 246–282 (HTRGTAMNPVDHPHGGGEGRTRGKHPESPWGWKTKGY) is disordered. The segment covering 256–272 (DHPHGGGEGRTRGKHPE) has biased composition (basic and acidic residues).

It belongs to the universal ribosomal protein uL2 family. As to quaternary structure, part of the 50S ribosomal subunit. Forms a bridge to the 30S subunit in the 70S ribosome.

Functionally, one of the primary rRNA binding proteins. Required for association of the 30S and 50S subunits to form the 70S ribosome, for tRNA binding and peptide bond formation. It has been suggested to have peptidyltransferase activity; this is somewhat controversial. Makes several contacts with the 16S rRNA in the 70S ribosome. This chain is Large ribosomal subunit protein uL2, found in Aquifex aeolicus (strain VF5).